Consider the following 393-residue polypeptide: Cytochrome b (393 aa).

A run of 4 helical transmembrane segments spans residues 32 to 52 (FGSLLAFCLVIQIITGVTLAM), 76 to 98 (WLIRYLHANTASAFFFIVYLHMG), 113 to 133 (VWTLGVIIFILMIVTAFLGYV), and 179 to 199 (FFALHFVLPFVLAALALMHLI). Residues H82 and H96 each contribute to the heme b site. Heme b is bound by residues H183 and H197. H202 is an a ubiquinone binding site. 4 helical membrane passes run 226 to 246 (FIFKDLITIFLFILGLSIFVF), 290 to 310 (LLGVIAMFAAIVILLVMPFTD), 322 to 342 (LSKIAYYFFIANFLILMKLGA), and 349 to 369 (FIEFGQISTVLYFSHFVIIVP).

Belongs to the cytochrome b family. Fungal cytochrome b-c1 complex contains 10 subunits; 3 respiratory subunits, 2 core proteins and 5 low-molecular weight proteins. Cytochrome b-c1 complex is a homodimer. Requires heme b as cofactor.

It localises to the mitochondrion inner membrane. In terms of biological role, component of the ubiquinol-cytochrome c reductase complex (complex III or cytochrome b-c1 complex) that is part of the mitochondrial respiratory chain. The b-c1 complex mediates electron transfer from ubiquinol to cytochrome c. Contributes to the generation of a proton gradient across the mitochondrial membrane that is then used for ATP synthesis. This Venturia inaequalis (Apple scab fungus) protein is Cytochrome b (COB).